Reading from the N-terminus, the 351-residue chain is MNPPKSAPDAQGLSYRDAGVDIDAGDALVDKIKPFAKKTLRDGVLGGIGGFGALFEVPKKYREPVLVSGTDGVGTKLKLAFHLNKHDTVGQDLVAMSVNDILVQGAEPLFFLDYFACGKLDVETAATVVKGIATGCELAGCALIGGETAEMPGMYPDGEYDLAGFAVGAVEKSKIIDGSTIAEGDVVLGLASSGIHSNGFSLVRKIIERANPDLSADFHGRSLADALMAPTRIYVKPLLALMEKIAVKGMAHITGGGLVENIPRVLRDGLTAELDQHAWPLPPLFQWLRQHGGVADAEMHRVFNCGIGMAVIVSAADADDALRQLADAGEQVWKIGTVRASREGEAQTVVV.

The protein belongs to the AIR synthase family.

It is found in the cytoplasm. The enzyme catalyses 2-formamido-N(1)-(5-O-phospho-beta-D-ribosyl)acetamidine + ATP = 5-amino-1-(5-phospho-beta-D-ribosyl)imidazole + ADP + phosphate + H(+). It functions in the pathway purine metabolism; IMP biosynthesis via de novo pathway; 5-amino-1-(5-phospho-D-ribosyl)imidazole from N(2)-formyl-N(1)-(5-phospho-D-ribosyl)glycinamide: step 2/2. In Burkholderia pseudomallei (strain 1710b), this protein is Phosphoribosylformylglycinamidine cyclo-ligase.